The chain runs to 356 residues: Tyrosine recombinase XerS (356 aa).

The Core-binding (CB) domain occupies 16-121; sequence LMPWYVLEYY…ALSSLYKYLT (106 aa). The Tyr recombinase domain maps to 169 to 354; sequence GFLTYIDQEH…VSDEQKNALD (186 aa). Residues R210, K234, H306, R309, and H332 contribute to the active site. Catalysis depends on Y341, which acts as the O-(3'-phospho-DNA)-tyrosine intermediate.

The protein belongs to the 'phage' integrase family. XerS subfamily.

It localises to the cytoplasm. With respect to regulation, ftsK is required for recombination. Site-specific tyrosine recombinase, which acts by catalyzing the cutting and rejoining of the recombining DNA molecules. Essential to convert dimers of the bacterial chromosome into monomers to permit their segregation at cell division. This Streptococcus pneumoniae (strain 70585) protein is Tyrosine recombinase XerS.